A 461-amino-acid chain; its full sequence is MRVLIKNGTVVNADGQAKQDLLIESAIVRQLGNNISPQLPYEEIDATGCYVFPGGVDVHTHFNIDVGIARSCDDFFTGTRAAACGGTTTIIDHMGFGPNGCRLRHQLEVYRGYAAHKAVIDYSFHGVIQHINHAILDEIPMMVEEGLSSFKLYLTYQYKLNDDEVLQALRRLHESGALTTVHPENDAAIASKRAEFIAAGLTAPRYHALSRPLECEAEAIARMINLAQIAGNAPLYIVHLSNGLGLDYLRLARANHQPVWVETCPQYLLLDERSYDTEDGMKFILSPPLRNVREQDKLWCGISDGAIDVVATDHCTFSMAQRLQISKGDFSRCPNGLPGVENRMQLLFSSGVMTGRITPERFVELTSAMPARLFGLWPQKGLLAPGSDGDVVIIDPRQSQQIQHRHLHDNADYSPWEGFTCQGAIVRTLSRGETIFCDGTFTGKAGRGRFLRRKPFVPPVL.

Residues His59, His61, and Lys151 each coordinate a divalent metal cation. Position 151 is an N6-carboxylysine (Lys151). Substrate is bound at residue Tyr156. A divalent metal cation-binding residues include His182 and His239. Ser286 contributes to the substrate binding site. Residue Asp313 coordinates a divalent metal cation. Residue Asn335 participates in substrate binding.

It belongs to the metallo-dependent hydrolases superfamily. Hydantoinase/dihydropyrimidinase family. In terms of assembly, homotetramer. It depends on a divalent metal cation as a cofactor. Post-translationally, carboxylation allows a single lysine to coordinate two divalent metal cations.

The catalysed reaction is D-5-phenylhydantoin + H2O = N-carbamoyl-D-phenylglycine + H(+). Functionally, catalyzes the stereospecific hydrolysis of the cyclic amide bond of D-hydantoin derivatives with an aromatic side chains at the 5'-position. Has no activity on dihydropyrimidines. The physiological function is unknown. This chain is D-phenylhydantoinase, found in Escherichia coli O17:K52:H18 (strain UMN026 / ExPEC).